Consider the following 64-residue polypeptide: Large ribosomal subunit protein bL35 (64 aa).

The segment covering 38-53 has biased composition (basic residues); that stretch reads KRKANLNAPKHVHHTN. The disordered stretch occupies residues 38 to 64; sequence KRKANLNAPKHVHHTNAHSVMSLLCRA.

Belongs to the bacterial ribosomal protein bL35 family.

In Helicobacter pylori (strain G27), this protein is Large ribosomal subunit protein bL35.